Consider the following 474-residue polypeptide: 3-isopropylmalate dehydratase large subunit (474 aa).

Cys-353, Cys-414, and Cys-417 together coordinate [4Fe-4S] cluster.

This sequence belongs to the aconitase/IPM isomerase family. LeuC type 1 subfamily. In terms of assembly, heterodimer of LeuC and LeuD. The cofactor is [4Fe-4S] cluster.

The enzyme catalyses (2R,3S)-3-isopropylmalate = (2S)-2-isopropylmalate. It functions in the pathway amino-acid biosynthesis; L-leucine biosynthesis; L-leucine from 3-methyl-2-oxobutanoate: step 2/4. In terms of biological role, catalyzes the isomerization between 2-isopropylmalate and 3-isopropylmalate, via the formation of 2-isopropylmaleate. The chain is 3-isopropylmalate dehydratase large subunit from Pseudomonas aeruginosa (strain LESB58).